Here is a 432-residue protein sequence, read N- to C-terminus: Metacaspase-1 (432 aa).

The span at 1 to 11 (MEVMDHHHHTS) shows a compositional bias: basic residues. Disordered stretches follow at residues 1-21 (MEVMDHHHHTSSTRPNPTTRR) and 41-87 (PQPG…PNAP). Positions 12 to 21 (STRPNPTTRR) are enriched in low complexity. Pro residues predominate over residues 46-74 (GAPPPQGGYGYPQPPPPQQPYGYSQPPPQ). Catalysis depends on residues His223 and Cys279.

Belongs to the peptidase C14B family.

Functionally, involved in cell death (apoptosis). In Sclerotinia sclerotiorum (strain ATCC 18683 / 1980 / Ss-1) (White mold), this protein is Metacaspase-1 (casA).